Here is a 275-residue protein sequence, read N- to C-terminus: NH(3)-dependent NAD(+) synthetase (275 aa).

Residue 47-54 (GISGGQDS) coordinates ATP. Asp-53 contributes to the Mg(2+) binding site. Position 141 (Arg-141) interacts with deamido-NAD(+). Thr-161 contacts ATP. Position 166 (Glu-166) interacts with Mg(2+). Positions 174 and 181 each coordinate deamido-NAD(+). Positions 190 and 212 each coordinate ATP. A deamido-NAD(+)-binding site is contributed by 261-262 (HK).

The protein belongs to the NAD synthetase family. As to quaternary structure, homodimer.

The enzyme catalyses deamido-NAD(+) + NH4(+) + ATP = AMP + diphosphate + NAD(+) + H(+). It functions in the pathway cofactor biosynthesis; NAD(+) biosynthesis; NAD(+) from deamido-NAD(+) (ammonia route): step 1/1. Its function is as follows. Catalyzes the ATP-dependent amidation of deamido-NAD to form NAD. Uses ammonia as a nitrogen source. This Lacticaseibacillus paracasei (strain ATCC 334 / BCRC 17002 / CCUG 31169 / CIP 107868 / KCTC 3260 / NRRL B-441) (Lactobacillus paracasei) protein is NH(3)-dependent NAD(+) synthetase.